A 170-amino-acid polypeptide reads, in one-letter code: Large ribosomal subunit protein uL5 (170 aa).

The protein belongs to the universal ribosomal protein uL5 family. Part of the 50S ribosomal subunit; contacts the 5S rRNA and probably tRNA. Forms a bridge to the 30S subunit in the 70S ribosome.

In terms of biological role, this is one of the proteins that bind and probably mediate the attachment of the 5S RNA into the large ribosomal subunit, where it forms part of the central protuberance. In the 70S ribosome it contacts protein S13 of the 30S subunit (bridge B1b), connecting the 2 subunits; this bridge is implicated in subunit movement. May contact the P site tRNA; the 5S rRNA and some of its associated proteins might help stabilize positioning of ribosome-bound tRNAs. The protein is Large ribosomal subunit protein uL5 of Thermoplasma acidophilum (strain ATCC 25905 / DSM 1728 / JCM 9062 / NBRC 15155 / AMRC-C165).